The chain runs to 481 residues: Flavonol 3-O-glucosyltransferase UGT71C1 (481 aa).

H19 serves as the catalytic Proton acceptor. H19 contacts an anthocyanidin. The active-site Charge relay is D131. UDP-alpha-D-glucose is bound by residues T153, A352, Q354, H369, W372, N373, S374, and E377. A392 contributes to the an anthocyanidin binding site. Positions 393 and 394 each coordinate UDP-alpha-D-glucose.

It belongs to the UDP-glycosyltransferase family.

It catalyses the reaction a flavonol + UDP-alpha-D-glucose = a flavonol 3-O-beta-D-glucoside + UDP + H(+). The enzyme catalyses a 7-O-hydroxy-flavonol + UDP-alpha-D-glucose = a flavonol 7-O-beta-D-glucoside + UDP + H(+). Its function is as follows. Possesses quercetin 7-O-glucosyltransferase and 3'-O-glucosyltransferase activities in vitro. Also active in vitro on benzoates and benzoate derivatives. Glucosylates other secondary metabolites in vitro like trans-resveratrol, curcumin, vanillin and etoposide. The protein is Flavonol 3-O-glucosyltransferase UGT71C1 of Arabidopsis thaliana (Mouse-ear cress).